We begin with the raw amino-acid sequence, 293 residues long: tRNA pseudouridine synthase A (293 aa).

The active-site Nucleophile is the D60. Residue Y118 coordinates substrate.

This sequence belongs to the tRNA pseudouridine synthase TruA family. In terms of assembly, homodimer.

It catalyses the reaction uridine(38/39/40) in tRNA = pseudouridine(38/39/40) in tRNA. In terms of biological role, formation of pseudouridine at positions 38, 39 and 40 in the anticodon stem and loop of transfer RNAs. This Rippkaea orientalis (strain PCC 8801 / RF-1) (Cyanothece sp. (strain PCC 8801)) protein is tRNA pseudouridine synthase A.